Reading from the N-terminus, the 347-residue chain is Phenylalanine--tRNA ligase alpha subunit (347 aa).

Glu-268 is a Mg(2+) binding site.

The protein belongs to the class-II aminoacyl-tRNA synthetase family. Phe-tRNA synthetase alpha subunit type 1 subfamily. As to quaternary structure, tetramer of two alpha and two beta subunits. Mg(2+) is required as a cofactor.

It is found in the cytoplasm. The enzyme catalyses tRNA(Phe) + L-phenylalanine + ATP = L-phenylalanyl-tRNA(Phe) + AMP + diphosphate + H(+). The protein is Phenylalanine--tRNA ligase alpha subunit of Leptothrix cholodnii (strain ATCC 51168 / LMG 8142 / SP-6) (Leptothrix discophora (strain SP-6)).